We begin with the raw amino-acid sequence, 391 residues long: MASRGFAPLSGRQENIMVLGRADGLHALKPGQRVVLGVLTENDQHNRVFGQVSSKYVPALRDASTLDVSTSSATLGVHVVEPVIAQATKPTSFLLPSELLLVDDVVQDLGSGSCMDSSMQSLPEEAAYEDILCVPEYAEDIHRYLRECEVKYRPKPGYMRKQPDITNCMRVILVDWLVEVGEEYKLCSETLFLAVNYLDRFLSCMSVLRGKLQLVGTAAVLLAAKYEEVYPPEVDEFVYITDDTYTKKQLLRMEQHLLRVLAFDMTAPTVHQFLMQYTLEGHICARTVNLALYLSELSLLEVDPFVQYLPSKTAAAAYCLANYTLNGVLWPENLYAFTGYSLAVIIPCLMELHKLHLGAAGRPQQAIQEKYKGSKYCGVSLLEPVESLPLP.

Belongs to the cyclin family. Cyclin AB subfamily. As to quaternary structure, interacts with the CDK1 and the CDK2 protein kinases to form a serine/threonine kinase holoenzyme complex. The cyclin subunit imparts substrate specificity to the complex.

The protein resides in the nucleus. In terms of biological role, may be involved in the control of the cell cycle at the G1/S (start) and G2/M (mitosis) transitions. The polypeptide is Cyclin-A1 (ccna1) (Carassius auratus (Goldfish)).